Reading from the N-terminus, the 197-residue chain is Class A basic helix-loop-helix protein 15 (197 aa).

Residues Met1 to Thr12 show a composition bias toward basic residues. Disordered regions lie at residues Met1–Arg82 and Gln178–Ser197. Thr12 and Thr25 each carry phosphothreonine. Residues Gly65 to Arg82 are compositionally biased toward basic and acidic residues. One can recognise a bHLH domain in the interval Gln72–Leu124.

Forms homodimers or heterodimers with TCF3 gene products E12 and E47. These dimers bind to the E-box site, however, heterodimer with MYOD1 does not bind target DNA. Expressed in pancreatic tissue only in acinar cells. There is a complete absence of expression in intra- or interlobular pancreatic ducts and in all islet cells.

It localises to the nucleus. Its function is as follows. Plays a role in controlling the transcriptional activity of MyoD, ensuring that expanding myoblast populations remain undifferentiated. Repression may occur through muscle-specific E-box occupancy by homodimers. May also negatively regulate bHLH-mediated transcription through an N-terminal repressor domain. Serves as a key regulator of acinar cell function, stability, and identity. Also required for normal organelle localization in exocrine cells and for mitochondrial calcium ion transport. May function as a unique regulator of gene expression in several different embryonic and postnatal cell lineages. Binds to the E-box consensus sequence 5'-CANNTG-3'. This Mus musculus (Mouse) protein is Class A basic helix-loop-helix protein 15 (Bhlha15).